The following is a 339-amino-acid chain: 2-deoxy-scyllo-inosamine dehydrogenase (339 aa).

Zn(2+)-binding residues include cysteine 37, histidine 59, cysteine 88, cysteine 91, cysteine 94, cysteine 102, and glutamate 143.

This sequence belongs to the zinc-containing alcohol dehydrogenase family. DOIA dehydrogenase subfamily. Zn(2+) is required as a cofactor.

The catalysed reaction is 2-deoxy-scyllo-inosamine + NADP(+) = 3-amino-2,3-dideoxy-scyllo-inosose + NADPH + H(+). It catalyses the reaction 2-deoxy-scyllo-inosamine + NAD(+) = 3-amino-2,3-dideoxy-scyllo-inosose + NADH + H(+). It participates in metabolic intermediate biosynthesis; 2-deoxystreptamine biosynthesis; 2-deoxystreptamine from D-glucose 6-phosphate: step 3/4. The protein operates within antibiotic biosynthesis; paromomycin biosynthesis. In terms of biological role, catalyzes the oxidation of 2-deoxy-scyllo-inosamine (DOIA) with NAD(+) or NADP(+), forming 3-amino-2,3-dideoxy-scyllo-inosose (amino-DOI). In Streptomyces paromomycinus (Streptomyces rimosus subsp. paromomycinus), this protein is 2-deoxy-scyllo-inosamine dehydrogenase (parE).